The following is a 322-amino-acid chain: tRNA-modifying protein YgfZ (322 aa).

W182 is a folate binding site.

The protein belongs to the tRNA-modifying YgfZ family.

The protein localises to the cytoplasm. Folate-binding protein involved in regulating the level of ATP-DnaA and in the modification of some tRNAs. It is probably a key factor in regulatory networks that act via tRNA modification, such as initiation of chromosomal replication. This chain is tRNA-modifying protein YgfZ, found in Vibrio campbellii (strain ATCC BAA-1116).